Consider the following 326-residue polypeptide: Porin-like protein H (326 aa).

Positions 1–19 (MKKTLVALAILTAAGSANA) are cleaved as a signal peptide.

Belongs to the Gram-negative porin family. As to quaternary structure, oligomer.

Its subcellular location is the cell outer membrane. Its function is as follows. Forms pores that allow passive diffusion of small molecules across the outer membrane. The protein is Porin-like protein H (ompH) of Photobacterium profundum (strain SS9).